The chain runs to 383 residues: Acetylornithine deacetylase (383 aa).

Residue histidine 80 coordinates Zn(2+). Aspartate 82 is a catalytic residue. Zn(2+) is bound at residue aspartate 112. The active site involves glutamate 144. Zn(2+)-binding residues include glutamate 145, glutamate 169, and histidine 355.

Belongs to the peptidase M20A family. ArgE subfamily. In terms of assembly, homodimer. The cofactor is Zn(2+). It depends on Co(2+) as a cofactor. Glutathione is required as a cofactor.

It is found in the cytoplasm. The enzyme catalyses N(2)-acetyl-L-ornithine + H2O = L-ornithine + acetate. It participates in amino-acid biosynthesis; L-arginine biosynthesis; L-ornithine from N(2)-acetyl-L-ornithine (linear): step 1/1. In terms of biological role, catalyzes the hydrolysis of the amide bond of N(2)-acetylated L-amino acids. Cleaves the acetyl group from N-acetyl-L-ornithine to form L-ornithine, an intermediate in L-arginine biosynthesis pathway, and a branchpoint in the synthesis of polyamines. The polypeptide is Acetylornithine deacetylase (Escherichia coli (strain K12 / MC4100 / BW2952)).